Reading from the N-terminus, the 369-residue chain is Cobalt-precorrin-5B C(1)-methyltransferase (369 aa).

This sequence belongs to the CbiD family.

It carries out the reaction Co-precorrin-5B + S-adenosyl-L-methionine = Co-precorrin-6A + S-adenosyl-L-homocysteine. The protein operates within cofactor biosynthesis; adenosylcobalamin biosynthesis; cob(II)yrinate a,c-diamide from sirohydrochlorin (anaerobic route): step 6/10. Its function is as follows. Catalyzes the methylation of C-1 in cobalt-precorrin-5B to form cobalt-precorrin-6A. The chain is Cobalt-precorrin-5B C(1)-methyltransferase from Prosthecochloris aestuarii (strain DSM 271 / SK 413).